Here is a 416-residue protein sequence, read N- to C-terminus: tRNA (guanine-N(7)-)-methyltransferase non-catalytic subunit wuho (416 aa).

The tract at residues 47 to 88 (TQSQESCPATATSTTAGKEPGGKEQQLAKQPEEGGTSASGSV) is disordered. Over residues 49–62 (SQESCPATATSTTA) the composition is skewed to polar residues. WD repeat units follow at residues 89-130 (ATST…ARLL), 177-216 (GHLSVVYDILWSEDQQHIITCDRDDKIRVTNYPATFDIHS), 220-258 (GHREFVSGLALLTEQHIASASGDKTLRVWNYIQGKELLQ), and 317-357 (AGSW…PTTN).

It belongs to the WD repeat TRM82 family. As to quaternary structure, forms a heterodimer with the catalytic subunit Mettl1. Interacts with mei-P26 and weakly interacts with bgcn; required for the function or formation of the mei-P26-bgcn-bam-sxl complex. Interacts with nanos; may be involved in mei-P26-dependent derepression of the BMP signaling pathway. Interacts with Myc; the interaction may be mediated by mei-P26 and may be involved in the regulation of ribosome biogenesis. In testis, it is present at high level in hub cells, a niche for germline stem cells of testis. Ubiquitously expressed in all testicular cells throughout spermatogenesis. Ubiquitously expressed in all germline and somatic cells of the ovary.

The protein resides in the nucleus. The protein localises to the cytoplasm. It participates in tRNA modification; N(7)-methylguanine-tRNA biosynthesis. Its function is as follows. Required for the Mettl1-dependent formation of N(7)-methylguanine at position 46 (m7G46) in tRNA. In the Mettl1-wuho methyltransferase complex, it is required to stabilize and induce conformational changes of the catalytic subunit. Required for binding of nanos mRNA and repression of translation by the mei-P26-bgcn-bam-sxl complex. May cooperate with mei-P26 and nanos to derepress the BMP signaling pathway. May cooperate with mei-P26 to suppress expression of a subset of microRNAs. May cooperate with mei-P26 to regulate bam expression levels in germline cells during gametogenesis. Required to promote mitosis to meiosis transition during gametogenesis. May regulate germline cell division in part by regulating ribosome biogenesis. The sequence is that of tRNA (guanine-N(7)-)-methyltransferase non-catalytic subunit wuho from Drosophila erecta (Fruit fly).